We begin with the raw amino-acid sequence, 396 residues long: Acetate kinase (396 aa).

Residue asparagine 8 coordinates Mg(2+). Residue lysine 15 coordinates ATP. Arginine 89 provides a ligand contact to substrate. The Proton donor/acceptor role is filled by aspartate 146. ATP contacts are provided by residues 206-210 (HLGNG), 281-283 (DLR), and 329-333 (GIGEN). Glutamate 382 is a binding site for Mg(2+).

Belongs to the acetokinase family. As to quaternary structure, homodimer. Requires Mg(2+) as cofactor. It depends on Mn(2+) as a cofactor.

It is found in the cytoplasm. The enzyme catalyses acetate + ATP = acetyl phosphate + ADP. Its pathway is metabolic intermediate biosynthesis; acetyl-CoA biosynthesis; acetyl-CoA from acetate: step 1/2. In terms of biological role, catalyzes the formation of acetyl phosphate from acetate and ATP. Can also catalyze the reverse reaction. This Geobacillus kaustophilus (strain HTA426) protein is Acetate kinase.